The primary structure comprises 498 residues: MRTNPTTSPPGASTIEEKSTGRIDQIIGPVLDVTFPPGKLPYIYNALVVQSRDTDDKQINVTCEVQQLLGNNRVRAVAMSATDGLMRGMEVIDTGAPLSVPVGGATLGRIFNVLGEPVDNLGPVDSSATFPIHRSAPAFIELDTKLSIFETGIKVVDLLAPYRRGGKIGLFGGAGVGKTVLIMELINNIAKAHGGVSVFGGVGERTREGNDLYMEMKESGVINEKNIEESKVALVYGQMNEPPGARMRVGLTALTMAEYFRDVNKQDVLLFIDNIFRFVQAGSEVSALLGRMPSAVGYQPTLSTEMGSLQERIASTKKGSITSIQAVYVPADDLTDPAPATTFAHLDATTVLSRGLASKGIYPAVDPLDSTSTMLQPRIVGNEHYETAQRVKETLQRYKELQDIIAILGLDELSEEDRLTVARARKIERFLSQPFFVAEVFTGSPGKYVALAETIRGFQLILSGELDGLPEQAFYLVGNIDEASTKAITLEEENKSQK.

172–179 is a binding site for ATP; that stretch reads GGAGVGKT.

Belongs to the ATPase alpha/beta chains family. As to quaternary structure, F-type ATPases have 2 components, CF(1) - the catalytic core - and CF(0) - the membrane proton channel. CF(1) has five subunits: alpha(3), beta(3), gamma(1), delta(1), epsilon(1). CF(0) has four main subunits: a(1), b(1), b'(1) and c(9-12).

It localises to the plastid. Its subcellular location is the chloroplast thylakoid membrane. The enzyme catalyses ATP + H2O + 4 H(+)(in) = ADP + phosphate + 5 H(+)(out). Functionally, produces ATP from ADP in the presence of a proton gradient across the membrane. The catalytic sites are hosted primarily by the beta subunits. In Triticum aestivum (Wheat), this protein is ATP synthase subunit beta, chloroplastic.